The sequence spans 195 residues: MKIIGLTGSIAMGKSTAADFFKQAGISVFSADETVHQLYKSKPILSLIEHTFPGVVENGKVNRLKLSKILINDSEKLQTLEEIIHPLVQEKEKEFIDTARQQGKKIVVLDIPLLFEKKGEKRVDSIIVVSAPLAIQKERTMTRPDMNEKKFSFINAKQMPDEKKRERADFIINTGKDLENTHQQVFSIIENLLKN.

Residues 3 to 195 (IIGLTGSIAM…FSIIENLLKN (193 aa)) enclose the DPCK domain. 11 to 16 (AMGKST) contacts ATP.

This sequence belongs to the CoaE family.

The protein resides in the cytoplasm. It catalyses the reaction 3'-dephospho-CoA + ATP = ADP + CoA + H(+). The protein operates within cofactor biosynthesis; coenzyme A biosynthesis; CoA from (R)-pantothenate: step 5/5. In terms of biological role, catalyzes the phosphorylation of the 3'-hydroxyl group of dephosphocoenzyme A to form coenzyme A. The chain is Dephospho-CoA kinase from Bartonella quintana (strain Toulouse) (Rochalimaea quintana).